The chain runs to 136 residues: Large ribosomal subunit protein uL13 (136 aa).

The protein belongs to the universal ribosomal protein uL13 family. As to quaternary structure, part of the 50S ribosomal subunit.

Functionally, this protein is one of the early assembly proteins of the 50S ribosomal subunit, although it is not seen to bind rRNA by itself. It is important during the early stages of 50S assembly. The polypeptide is Large ribosomal subunit protein uL13 (Thermoplasma acidophilum (strain ATCC 25905 / DSM 1728 / JCM 9062 / NBRC 15155 / AMRC-C165)).